The following is a 296-amino-acid chain: Lipoyl synthase (296 aa).

The [4Fe-4S] cluster site is built by Cys37, Cys42, Cys48, Cys63, Cys67, Cys70, and Ser276. In terms of domain architecture, Radical SAM core spans 49 to 265; it reads WSKKHTTVMI…ERVAKTKGFL (217 aa).

The protein belongs to the radical SAM superfamily. Lipoyl synthase family. The cofactor is [4Fe-4S] cluster.

The protein resides in the cytoplasm. It catalyses the reaction [[Fe-S] cluster scaffold protein carrying a second [4Fe-4S](2+) cluster] + N(6)-octanoyl-L-lysyl-[protein] + 2 oxidized [2Fe-2S]-[ferredoxin] + 2 S-adenosyl-L-methionine + 4 H(+) = [[Fe-S] cluster scaffold protein] + N(6)-[(R)-dihydrolipoyl]-L-lysyl-[protein] + 4 Fe(3+) + 2 hydrogen sulfide + 2 5'-deoxyadenosine + 2 L-methionine + 2 reduced [2Fe-2S]-[ferredoxin]. It functions in the pathway protein modification; protein lipoylation via endogenous pathway; protein N(6)-(lipoyl)lysine from octanoyl-[acyl-carrier-protein]: step 2/2. Functionally, catalyzes the radical-mediated insertion of two sulfur atoms into the C-6 and C-8 positions of the octanoyl moiety bound to the lipoyl domains of lipoate-dependent enzymes, thereby converting the octanoylated domains into lipoylated derivatives. The polypeptide is Lipoyl synthase (Rickettsia conorii (strain ATCC VR-613 / Malish 7)).